The chain runs to 819 residues: Leucine--tRNA ligase (819 aa).

A 'HIGH' region motif is present at residues 40–51 (PYPSGAGLHVGH). Positions 600 to 604 (KMSKS) match the 'KMSKS' region motif. K603 contacts ATP.

It belongs to the class-I aminoacyl-tRNA synthetase family.

It localises to the cytoplasm. It catalyses the reaction tRNA(Leu) + L-leucine + ATP = L-leucyl-tRNA(Leu) + AMP + diphosphate. In Chlamydia trachomatis serovar A (strain ATCC VR-571B / DSM 19440 / HAR-13), this protein is Leucine--tRNA ligase.